Reading from the N-terminus, the 216-residue chain is MDNRTAIIKQPDNISSFHDVYKLQKEYQEALILDNSNPDFIWIGEHQLCYTLGRGSNYDNLLFSLNDAKYDVFKIDRGGEVTCHMPGQLVTYLVLDLKNFNKDLNWYLRKIEEIIIKILGAFNIDCHSRKGFTGVWIGNKKIASIGIGCKKWITINGFSINIDCELENFNKIVPCGIENCLMANMIDYNKNLNIQEVKRIVKKTIEEEFNFDFISK.

One can recognise a BPL/LPL catalytic domain in the interval 35–213 (NSNPDFIWIG…TIEEEFNFDF (179 aa)). Substrate contacts are provided by residues 77-84 (RGGEVTCH), 144-146 (SIG), and 157-159 (GFS). The active-site Acyl-thioester intermediate is the Cys175.

This sequence belongs to the LipB family.

The protein localises to the cytoplasm. It catalyses the reaction octanoyl-[ACP] + L-lysyl-[protein] = N(6)-octanoyl-L-lysyl-[protein] + holo-[ACP] + H(+). It participates in protein modification; protein lipoylation via endogenous pathway; protein N(6)-(lipoyl)lysine from octanoyl-[acyl-carrier-protein]: step 1/2. In terms of biological role, catalyzes the transfer of endogenously produced octanoic acid from octanoyl-acyl-carrier-protein onto the lipoyl domains of lipoate-dependent enzymes. Lipoyl-ACP can also act as a substrate although octanoyl-ACP is likely to be the physiological substrate. This chain is Octanoyltransferase, found in Prochlorococcus marinus (strain MIT 9301).